The primary structure comprises 143 residues: Hemoglobin subunit alpha (143 aa).

A Globin domain is found at Arg-2 to Arg-143. Residue His-60 coordinates O2. His-89 serves as a coordination point for heme b.

Belongs to the globin family. In terms of assembly, heterotetramer of two alpha chains and two beta chains. Red blood cells.

Involved in oxygen transport from the lung to the various peripheral tissues. This Lepidosiren paradoxus (South American lungfish) protein is Hemoglobin subunit alpha (HBA).